We begin with the raw amino-acid sequence, 87 residues long: MANIKSQIKRIGTNKKAQERNKAVKSELKTAIRSVKTAISAGDKDAAVKAVSLAGKKLDKAASKGVIHKNQAANRKGAIAKQVAKIG.

The segment at 1–22 is disordered; sequence MANIKSQIKRIGTNKKAQERNK.

It belongs to the bacterial ribosomal protein bS20 family.

In terms of biological role, binds directly to 16S ribosomal RNA. This is Small ribosomal subunit protein bS20 from Clavibacter sepedonicus (Clavibacter michiganensis subsp. sepedonicus).